The chain runs to 259 residues: Hemin import ATP-binding protein HmuV (259 aa).

The region spanning I6–Q242 is the ABC transporter domain. Residue G38 to S45 coordinates ATP.

This sequence belongs to the ABC transporter superfamily. Heme (hemin) importer (TC 3.A.1.14.5) family. As to quaternary structure, the complex is composed of two ATP-binding proteins (HmuV), two transmembrane proteins (HmuU) and a solute-binding protein (HmuT).

The protein resides in the cell inner membrane. Part of the ABC transporter complex HmuTUV involved in hemin import. Responsible for energy coupling to the transport system. The chain is Hemin import ATP-binding protein HmuV from Vibrio cholerae serotype O1 (strain ATCC 39315 / El Tor Inaba N16961).